Here is a 95-residue protein sequence, read N- to C-terminus: Co-chaperonin GroES (95 aa).

This sequence belongs to the GroES chaperonin family. In terms of assembly, heptamer of 7 subunits arranged in a ring. Interacts with the chaperonin GroEL.

It localises to the cytoplasm. Together with the chaperonin GroEL, plays an essential role in assisting protein folding. The GroEL-GroES system forms a nano-cage that allows encapsulation of the non-native substrate proteins and provides a physical environment optimized to promote and accelerate protein folding. GroES binds to the apical surface of the GroEL ring, thereby capping the opening of the GroEL channel. This Nitratidesulfovibrio vulgaris (strain ATCC 29579 / DSM 644 / CCUG 34227 / NCIMB 8303 / VKM B-1760 / Hildenborough) (Desulfovibrio vulgaris) protein is Co-chaperonin GroES.